The following is a 234-amino-acid chain: Putative N-acetylmannosamine-6-phosphate 2-epimerase (234 aa).

The protein belongs to the NanE family.

The enzyme catalyses an N-acyl-D-glucosamine 6-phosphate = an N-acyl-D-mannosamine 6-phosphate. It functions in the pathway amino-sugar metabolism; N-acetylneuraminate degradation; D-fructose 6-phosphate from N-acetylneuraminate: step 3/5. Converts N-acetylmannosamine-6-phosphate (ManNAc-6-P) to N-acetylglucosamine-6-phosphate (GlcNAc-6-P). This Klebsiella pneumoniae subsp. pneumoniae (strain ATCC 700721 / MGH 78578) protein is Putative N-acetylmannosamine-6-phosphate 2-epimerase.